Consider the following 273-residue polypeptide: MTDSLIRIAVAGSGGRMGRQLIQAVQQAPGVVLGAAISRPGSSLIGTDAGELAGVGALGVTVSDSLEKVVDDFDILIDFTRPESTLAYLAFCVEHKKAMVIGTTGFDDAGKDAIRAAGQQIGIVFAANFSVGVNLVLKLLEKAAQVMGDYTDIEIIEAHHRHKVDAPSGTALAMGEAIAGALGRDLKECAVYAREGYTGERDPKSIGFATVRAGDIVGEHTAMFADIGERVEITHKASSRMTFASGAVRAASWLHNHDKGLFDMRDVLNLDQL.

Residue 12–17 (GSGGRM) participates in NAD(+) binding. NADP(+) is bound at residue arginine 39. NAD(+) is bound by residues 102 to 104 (GTT) and 126 to 129 (AANF). Residue histidine 159 is the Proton donor/acceptor of the active site. Histidine 160 is a binding site for (S)-2,3,4,5-tetrahydrodipicolinate. Residue lysine 163 is the Proton donor of the active site. 169–170 (GT) contributes to the (S)-2,3,4,5-tetrahydrodipicolinate binding site.

Belongs to the DapB family. Homotetramer.

The protein resides in the cytoplasm. It carries out the reaction (S)-2,3,4,5-tetrahydrodipicolinate + NAD(+) + H2O = (2S,4S)-4-hydroxy-2,3,4,5-tetrahydrodipicolinate + NADH + H(+). The catalysed reaction is (S)-2,3,4,5-tetrahydrodipicolinate + NADP(+) + H2O = (2S,4S)-4-hydroxy-2,3,4,5-tetrahydrodipicolinate + NADPH + H(+). It functions in the pathway amino-acid biosynthesis; L-lysine biosynthesis via DAP pathway; (S)-tetrahydrodipicolinate from L-aspartate: step 4/4. In terms of biological role, catalyzes the conversion of 4-hydroxy-tetrahydrodipicolinate (HTPA) to tetrahydrodipicolinate. The sequence is that of 4-hydroxy-tetrahydrodipicolinate reductase from Serratia proteamaculans (strain 568).